Reading from the N-terminus, the 124-residue chain is Small ribosomal subunit protein uS12 (124 aa).

The interval Arg-9–Pro-28 is disordered. Asp-89 is modified (3-methylthioaspartic acid). Residues Thr-104–Glu-124 form a disordered region.

This sequence belongs to the universal ribosomal protein uS12 family. In terms of assembly, part of the 30S ribosomal subunit. Contacts proteins S8 and S17. May interact with IF1 in the 30S initiation complex.

In terms of biological role, with S4 and S5 plays an important role in translational accuracy. Functionally, interacts with and stabilizes bases of the 16S rRNA that are involved in tRNA selection in the A site and with the mRNA backbone. Located at the interface of the 30S and 50S subunits, it traverses the body of the 30S subunit contacting proteins on the other side and probably holding the rRNA structure together. The combined cluster of proteins S8, S12 and S17 appears to hold together the shoulder and platform of the 30S subunit. This is Small ribosomal subunit protein uS12 from Synechococcus sp. (strain RCC307).